Here is a 181-residue protein sequence, read N- to C-terminus: Large ribosomal subunit protein uL6 (181 aa).

This sequence belongs to the universal ribosomal protein uL6 family. In terms of assembly, part of the 50S ribosomal subunit.

Its function is as follows. This protein binds to the 23S rRNA, and is important in its secondary structure. It is located near the subunit interface in the base of the L7/L12 stalk, and near the tRNA binding site of the peptidyltransferase center. The sequence is that of Large ribosomal subunit protein uL6 from Synechococcus sp. (strain CC9605).